We begin with the raw amino-acid sequence, 254 residues long: Mitochondrial cardiolipin hydrolase (254 aa).

Residues 1–9 (MERFRWQVA) lie on the Mitochondrial intermembrane side of the membrane. Residues 1 to 43 (MERFRWQVAAVAAVGLALALEALPSVLCWLRAGRRQQQRPPRR) are required for mitochondrial localization. Residues 10 to 32 (AVAAVGLALALEALPSVLCWLRA) form a helical membrane-spanning segment. The Cytoplasmic portion of the chain corresponds to 33-254 (GRRQQQRPPR…SKCSHHLSQV (222 aa)). The C3H1-type; atypical zinc-finger motif lies at 49–82 (PSQVTCTEALLQAPGEAPSGPPAGCRCSLPHGES). A PLD phosphodiesterase domain is found at 155-182 (DLGYMHHKFAIVDKKVLITGSLNWTTQA). Active-site residues include histidine 160, lysine 162, and aspartate 167.

This sequence belongs to the phospholipase D family. MitoPLD/Zucchini subfamily. As to quaternary structure, homodimer. Interacts with MOV10L1. Interacts with MIGA1 and MIGA2; possibly facilitating homodimer formation. Interacts with GK2.

The protein localises to the mitochondrion outer membrane. Its subcellular location is the nucleus membrane. The protein resides in the cell membrane. It localises to the golgi apparatus. It catalyses the reaction a cardiolipin + H2O = a 1,2-diacyl-sn-glycero-3-phospho-(1'-sn-glycerol) + a 1,2-diacyl-sn-glycero-3-phosphate + H(+). Its activity is regulated as follows. Single stranded DNA (ssDNA) hydrolase activity does not depend upon, but is stimulated by the presence of Ca(2+) and Mn(2+). MIGA1 and MIGA2 increase PLD6 self-association affinity and affects the homodimer conformation facilitating its phospholipase activity over the nuclease activity. MYC induces its expression and stimulates its phospholipase activity. Functionally, presents phospholipase and nuclease activities, depending on the different physiological conditions. Interaction with Mitoguardin (MIGA1 or MIGA2) affects the dimer conformation, facilitating the lipase activity over the nuclease activity. Plays a key role in mitochondrial fusion and fission via its phospholipase activity. In its phospholipase role, it uses the mitochondrial lipid cardiolipin as substrate to generate phosphatidate (PA or 1,2-diacyl-sn-glycero-3-phosphate), a second messenger signaling lipid. Production of PA facilitates Mitofusin-mediated fusion, whereas the cleavage of PA by the Lipin family of phosphatases produces diacylgycerol (DAG) which promotes mitochondrial fission. Both Lipin and DAG regulate mitochondrial dynamics and membrane fusion/fission, important processes for adapting mitochondrial metabolism to changes in cell physiology. Mitochondrial fusion enables cells to cope with the increased nucleotide demand during DNA synthesis. Mitochondrial function and dynamics are closely associated with biological processes such as cell growth, proliferation, and differentiation. Mediator of MYC activity, promotes mitochondrial fusion and activates AMPK which in turn inhibits YAP/TAZ, thereby inducing cell growth and proliferation. The endonuclease activity plays a critical role in PIWI-interacting RNA (piRNA) biogenesis during spermatogenesis. Implicated in spermatogenesis and sperm fertility in testicular germ cells, its single strand-specific nuclease activity is critical for the biogenesis/maturation of PIWI-interacting RNA (piRNA). MOV10L1 selectively binds to piRNA precursors and funnels them to the endonuclease that catalyzes the first cleavage step of piRNA processing to generate piRNA intermediate fragments that are subsequently loaded to Piwi proteins. Cleaves either DNA or RNA substrates with similar affinity, producing a 5' phosphate end, in this way it participates in the processing of primary piRNA transcripts. piRNAs provide essential protection against the activity of mobile genetic elements. piRNA-mediated transposon silencing is thus critical for maintaining genome stability, in particular in germline cells when transposons are mobilized as a consequence of wide-spread genomic demethylation. PA may act as signaling molecule in the recognition/transport of the precursor RNAs of primary piRNAs. Interacts with tesmin in testes, suggesting a role in spermatogenesis via association with its interacting partner. The chain is Mitochondrial cardiolipin hydrolase (PLD6) from Canis lupus familiaris (Dog).